Here is a 93-residue protein sequence, read N- to C-terminus: U12-lycotoxin-Ls1d (93 aa).

The signal sequence occupies residues 1–18 (MKFAVILLFSLVVLAVAS). Positions 19–38 (ESVEEVRREIDIEDLPEQQR) are excised as a propeptide.

This sequence belongs to the neurotoxin 31 family. Contains 5 disulfide bonds. As to expression, expressed by the venom gland.

It localises to the secreted. This chain is U12-lycotoxin-Ls1d, found in Lycosa singoriensis (Wolf spider).